Here is a 120-residue protein sequence, read N- to C-terminus: Myohemerythrin (120 aa).

The Fe cation site is built by histidine 26, histidine 56, glutamate 60, histidine 75, histidine 79, histidine 108, and aspartate 113.

This sequence belongs to the hemerythrin family. In terms of assembly, monomer.

The protein resides in the cytoplasm. In terms of biological role, myohemerythrin is an oxygen-binding protein found in the retractor muscles of certain worms. The oxygen-binding site contains two iron atoms. This Theromyzon tessulatum (Duck leech) protein is Myohemerythrin.